The following is a 309-amino-acid chain: MTQDLPTPRGRLTPDKDLSGLTWLRVGGPADWLFQPADVDDLCAFMAELDPAVPVFPMGVGSNLIVRDGGLRGVVIKLGRPFMDISVEGDRITAGAAVLDARLAKEAADAGVDLTFLRTIPGSLGGALKMNAGCYGSYVADHFVGAQAVLRDGTQVTLTRDDITFAYRQTDIPEGVTITSVTLQGNREDSRVLHTRMEEQLAKRDATQPTKALTAGSTFRNPAGFSSTGQADDTHELKAWKVIDDAGMRGATRGGAQMSEMHSNFLVNKGGATAADLEGLGEEVRKRVFQTQGIDLVWEIMRVGVPEET.

One can recognise an FAD-binding PCMH-type domain in the interval 25-188 (RVGGPADWLF…TSVTLQGNRE (164 aa)). The active site involves arginine 168. The interval 202-231 (AKRDATQPTKALTAGSTFRNPAGFSSTGQA) is disordered. Over residues 207 to 231 (TQPTKALTAGSTFRNPAGFSSTGQA) the composition is skewed to polar residues. Serine 217 (proton donor) is an active-site residue. Residue glutamate 299 is part of the active site.

It belongs to the MurB family. It depends on FAD as a cofactor.

The protein localises to the cytoplasm. It catalyses the reaction UDP-N-acetyl-alpha-D-muramate + NADP(+) = UDP-N-acetyl-3-O-(1-carboxyvinyl)-alpha-D-glucosamine + NADPH + H(+). The protein operates within cell wall biogenesis; peptidoglycan biosynthesis. In terms of biological role, cell wall formation. This is UDP-N-acetylenolpyruvoylglucosamine reductase from Jannaschia sp. (strain CCS1).